Reading from the N-terminus, the 86-residue chain is uncharacterized protein (86 aa).

In terms of tissue distribution, retina-specific.

This is an uncharacterized protein from Homo sapiens (Human).